A 346-amino-acid chain; its full sequence is Galanin receptor type 1 (346 aa).

Residues 1–33 are Extracellular-facing; that stretch reads MELAPVNLSEGNGSDPEPPAEPRPLFGIGVENF. N-linked (GlcNAc...) asparagine glycans are attached at residues asparagine 7 and asparagine 12. Residues 34–54 traverse the membrane as a helical segment; sequence ITLVVFGLIFAMGVLGNSLVI. Over 55–69 the chain is Cytoplasmic; the sequence is TVLARSKPGKPRSTT. The helical transmembrane segment at 70-90 threads the bilayer; that stretch reads NLFILNLSIADLAYLLFCIPF. The Extracellular portion of the chain corresponds to 91 to 108; the sequence is QATVYALPTWVLGAFICK. Cysteine 107 and cysteine 185 are joined by a disulfide. The chain crosses the membrane as a helical span at residues 109–130; it reads FIHYFFTVSMLVSIFTLAAMSV. The Cytoplasmic segment spans residues 131-150; the sequence is DRYVAIVHSRRSSSLRVSRN. Residues 151–171 traverse the membrane as a helical segment; sequence ALLGVGFIWALSIAMASPVAY. Residues 172 to 196 lie on the Extracellular side of the membrane; the sequence is YQRLFHRDSNQTFCWEHWPNQLHKK. Asparagine 181 carries N-linked (GlcNAc...) asparagine glycosylation. A helical transmembrane segment spans residues 197–217; the sequence is AYVVCTFVFGYLLPLLLICFC. The Cytoplasmic portion of the chain corresponds to 218 to 246; that stretch reads YAKVLNHLHKKLKNMSKKSEASKKKTAQT. The chain crosses the membrane as a helical span at residues 247 to 267; it reads VLVVVVVFGISWLPHHVIHLW. Residues 268–269 lie on the Extracellular side of the membrane; it reads AE. The chain crosses the membrane as a helical span at residues 270-290; that stretch reads FGAFPLTPASFFFRITAHCLA. Topologically, residues 291–346 are cytoplasmic; the sequence is YSNSSVNPIIYAFLSENFRKAYKQVFKCRVCNESPHGDAKEKNRIDTPPSTNCTHV. A lipid anchor (S-palmitoyl cysteine) is attached at cysteine 318. The span at 326 to 335 shows a compositional bias: basic and acidic residues; the sequence is HGDAKEKNRI. Residues 326-346 are disordered; that stretch reads HGDAKEKNRIDTPPSTNCTHV.

It belongs to the G-protein coupled receptor 1 family. In terms of assembly, interacts with GRP39 AND HTR1A. Post-translationally, three cysteine residues are found in the C-terminus, at least one of which may be palmitoylated. Spinal cord, small intestine, Rin14B insulinoma cells and several brain regions, particularly ventral hippocampus, amygdala, supraoptic nucleus, hypothalamus, thalamus, lateral parabrachial nucleus and locus coeruleus.

It is found in the cell membrane. In terms of biological role, receptor for the hormone galanin. The activity of this receptor is mediated by G proteins that inhibit adenylate cyclase activity. This chain is Galanin receptor type 1 (Galr1), found in Rattus norvegicus (Rat).